Consider the following 362-residue polypeptide: Adenosine deaminase (362 aa).

Residues His19 and His21 each contribute to the Zn(2+) site. Substrate is bound by residues His21, Asp23, and Gly181. His208 contributes to the Zn(2+) binding site. Glu211 (proton donor) is an active-site residue. Residue Asp300 coordinates Zn(2+).

This sequence belongs to the metallo-dependent hydrolases superfamily. Adenosine and AMP deaminases family. Adenosine deaminase subfamily. Zn(2+) is required as a cofactor.

It carries out the reaction adenosine + H2O + H(+) = inosine + NH4(+). The catalysed reaction is 2'-deoxyadenosine + H2O + H(+) = 2'-deoxyinosine + NH4(+). Catalyzes the hydrolytic deamination of adenosine and 2-deoxyadenosine. This is Adenosine deaminase from Mycolicibacterium vanbaalenii (strain DSM 7251 / JCM 13017 / BCRC 16820 / KCTC 9966 / NRRL B-24157 / PYR-1) (Mycobacterium vanbaalenii).